A 479-amino-acid polypeptide reads, in one-letter code: Bifunctional protein HldE (479 aa).

Residues 1-322 (MLAETQLAPI…AALERTAAQI (322 aa)) form a ribokinase region. An ATP-binding site is contributed by 198 to 201 (NRRE). Aspartate 267 is a catalytic residue. The tract at residues 350–479 (FTNGCFDLVH…TSSLVAKART (130 aa)) is cytidylyltransferase.

This sequence in the N-terminal section; belongs to the carbohydrate kinase PfkB family. The protein in the C-terminal section; belongs to the cytidylyltransferase family. As to quaternary structure, homodimer.

The catalysed reaction is D-glycero-beta-D-manno-heptose 7-phosphate + ATP = D-glycero-beta-D-manno-heptose 1,7-bisphosphate + ADP + H(+). It catalyses the reaction D-glycero-beta-D-manno-heptose 1-phosphate + ATP + H(+) = ADP-D-glycero-beta-D-manno-heptose + diphosphate. It participates in nucleotide-sugar biosynthesis; ADP-L-glycero-beta-D-manno-heptose biosynthesis; ADP-L-glycero-beta-D-manno-heptose from D-glycero-beta-D-manno-heptose 7-phosphate: step 1/4. Its pathway is nucleotide-sugar biosynthesis; ADP-L-glycero-beta-D-manno-heptose biosynthesis; ADP-L-glycero-beta-D-manno-heptose from D-glycero-beta-D-manno-heptose 7-phosphate: step 3/4. Its function is as follows. Catalyzes the phosphorylation of D-glycero-D-manno-heptose 7-phosphate at the C-1 position to selectively form D-glycero-beta-D-manno-heptose-1,7-bisphosphate. In terms of biological role, catalyzes the ADP transfer from ATP to D-glycero-beta-D-manno-heptose 1-phosphate, yielding ADP-D-glycero-beta-D-manno-heptose. The chain is Bifunctional protein HldE from Azorhizobium caulinodans (strain ATCC 43989 / DSM 5975 / JCM 20966 / LMG 6465 / NBRC 14845 / NCIMB 13405 / ORS 571).